Here is a 626-residue protein sequence, read N- to C-terminus: Janus kinase and microtubule-interacting protein 1 (626 aa).

The segment at 1–22 (MSKKGRSKGEKPEMETDAVQMA) is disordered. A mediates association with microtubules region spans residues 1–365 (MSKKGRSKGE…KIKNLTRENV (365 aa)). Coiled coils occupy residues 19–255 (VQMA…EAER) and 284–413 (ERDV…DDLS). The mediates interaction with TYK2 and GABBR1 stretch occupies residues 365 to 626 (VEMKEKLSAQ…ILFEPKLKFM (262 aa)). Ser382 is modified (phosphoserine). A compositionally biased stretch (polar residues) spans 452–461 (ETLSETSYNT). The disordered stretch occupies residues 452–477 (ETLSETSYNTDRTDRTPATPEEDLDD). Residue Thr470 is modified to Phosphothreonine. Residues 490–604 (QLTREYQALQ…EFRVLELEVR (115 aa)) are a coiled coil.

This sequence belongs to the JAKMIP family. As to quaternary structure, homodimer. Forms a complex with GABBR1 and KIF5B/kinesin-1. Interacts with JAK1 and TYK2. In terms of tissue distribution, predominantly expressed in neural tissues and lymphoid cells (at protein level). Isoform 2, isoform 3 and isoform 4 are specifically expressed in brain and retina. Isoform 1 and isoform 5 are also detected in liver, lung and skeletal muscle. Also detected in testis and to a lower extent spleen and intestine.

It is found in the cytoplasm. Its subcellular location is the cytoskeleton. It localises to the membrane. Its function is as follows. Associates with microtubules and may play a role in the microtubule-dependent transport of the GABA-B receptor. May play a role in JAK1 signaling and regulate microtubule cytoskeleton rearrangements. This Homo sapiens (Human) protein is Janus kinase and microtubule-interacting protein 1 (JAKMIP1).